The primary structure comprises 310 residues: MSSKHREDHLKRGSDVSPYESLFAGSVSGGVARAITAPLDTIKIRLQLQTKSHKHPHTQKVSALNVVKDLLKNEGVIALWKGNVPAEILYVMYGAVQFTTYSALSKSLSQMEKDYSIVMPSSVHSLLAGVGAGIASTLTTYPFDLLRTRLVANKKKNLLSMTGTFRKILHAEGISGLFAGIRPAMISVASTTGLMFWSYELAREFSSEYKHVPFIEGICGFVAGATSKGITFPLDTLRKRCQIYSEVYGTKYKSSLRIFMNIVSREGVLGLYRGYGVSILKTAPTSAISLWTYEYVISATRHYRLSKPLV.

6 consecutive transmembrane segments (helical) span residues 16–32, 88–104, 117–141, 173–197, 218–234, and 274–291; these read VSPY…GGVA, ILYV…YSAL, IVMP…LTTY, GISG…LMFW, ICGF…TFPL, and GYGV…ISLW. Solcar repeat units lie at residues 16–107, 120–205, and 211–299; these read VSPY…LSKS, PSSV…AREF, and HVPF…VISA.

This sequence belongs to the mitochondrial carrier (TC 2.A.29) family.

It localises to the mitochondrion inner membrane. In terms of biological role, mitochondrial transporter that mediates uptake of thiamine pyrophosphate (ThPP) into mitochondria. The sequence is that of Mitochondrial thiamine pyrophosphate carrier 1 (TPC1) from Lodderomyces elongisporus (strain ATCC 11503 / CBS 2605 / JCM 1781 / NBRC 1676 / NRRL YB-4239) (Yeast).